A 533-amino-acid chain; its full sequence is CEP295 N-terminal-like protein (533 aa).

Disordered regions lie at residues 1–40 (MQRDTERAAQLSPSSEDEALVLRQKPLEMPAQEEDSTTLQ), 84–176 (RSMG…RVTR), 286–333 (LKAD…ETTE), and 370–399 (AGTSREQDDLLSLSPESGQEPPKSPLLEDE). A coiled-coil region spans residues 40 to 72 (QQWKARQLQRLAEELKAEWQEARLQQVRQAERL). The span at 107–126 (KERNRAAFREERGRREEHPR) shows a compositional bias: basic and acidic residues. Residues 416 to 531 (MALRQKQKAE…ARKRLQEFQK (116 aa)) adopt a coiled-coil conformation.

Expressed in mature spermatozoa (at protein level). Detected in retina, lung and kidney. In brain, highly expressed in brain-stem, cerebral cortex and thalamus with lesser expression in cerebellum and hippocampus.

The protein localises to the cell projection. The protein resides in the cilium. This Mus musculus (Mouse) protein is CEP295 N-terminal-like protein.